The following is a 94-amino-acid chain: Co-chaperonin GroES (94 aa).

The protein belongs to the GroES chaperonin family. In terms of assembly, heptamer of 7 subunits arranged in a ring. Interacts with the chaperonin GroEL.

Its subcellular location is the cytoplasm. Together with the chaperonin GroEL, plays an essential role in assisting protein folding. The GroEL-GroES system forms a nano-cage that allows encapsulation of the non-native substrate proteins and provides a physical environment optimized to promote and accelerate protein folding. GroES binds to the apical surface of the GroEL ring, thereby capping the opening of the GroEL channel. This Clostridium botulinum (strain Eklund 17B / Type B) protein is Co-chaperonin GroES.